Consider the following 305-residue polypeptide: Homoserine O-acetyltransferase (305 aa).

Catalysis depends on Cys142, which acts as the Acyl-thioester intermediate. 2 residues coordinate substrate: Lys163 and Ser192. Residue His235 is the Proton acceptor of the active site. Residue Glu237 is part of the active site. Arg249 provides a ligand contact to substrate.

Belongs to the MetA family.

The protein localises to the cytoplasm. It carries out the reaction L-homoserine + acetyl-CoA = O-acetyl-L-homoserine + CoA. The protein operates within amino-acid biosynthesis; L-methionine biosynthesis via de novo pathway; O-acetyl-L-homoserine from L-homoserine: step 1/1. Its function is as follows. Transfers an acetyl group from acetyl-CoA to L-homoserine, forming acetyl-L-homoserine. This Bacteroides fragilis (strain ATCC 25285 / DSM 2151 / CCUG 4856 / JCM 11019 / LMG 10263 / NCTC 9343 / Onslow / VPI 2553 / EN-2) protein is Homoserine O-acetyltransferase.